The sequence spans 264 residues: 5'-nucleotidase SurE (264 aa).

D8, D9, S39, and N95 together coordinate a divalent metal cation.

It belongs to the SurE nucleotidase family. Requires a divalent metal cation as cofactor.

The protein localises to the cytoplasm. It carries out the reaction a ribonucleoside 5'-phosphate + H2O = a ribonucleoside + phosphate. In terms of biological role, nucleotidase that shows phosphatase activity on nucleoside 5'-monophosphates. The polypeptide is 5'-nucleotidase SurE (Syntrophomonas wolfei subsp. wolfei (strain DSM 2245B / Goettingen)).